Here is a 76-residue protein sequence, read N- to C-terminus: Exodeoxyribonuclease 7 small subunit (76 aa).

It belongs to the XseB family. In terms of assembly, heterooligomer composed of large and small subunits.

It is found in the cytoplasm. It carries out the reaction Exonucleolytic cleavage in either 5'- to 3'- or 3'- to 5'-direction to yield nucleoside 5'-phosphates.. Its function is as follows. Bidirectionally degrades single-stranded DNA into large acid-insoluble oligonucleotides, which are then degraded further into small acid-soluble oligonucleotides. This chain is Exodeoxyribonuclease 7 small subunit, found in Bacillus cereus (strain ATCC 14579 / DSM 31 / CCUG 7414 / JCM 2152 / NBRC 15305 / NCIMB 9373 / NCTC 2599 / NRRL B-3711).